We begin with the raw amino-acid sequence, 350 residues long: UDP-3-O-acylglucosamine N-acyltransferase (350 aa).

His-240 (proton acceptor) is an active-site residue.

This sequence belongs to the transferase hexapeptide repeat family. LpxD subfamily. Homotrimer.

It carries out the reaction a UDP-3-O-[(3R)-3-hydroxyacyl]-alpha-D-glucosamine + a (3R)-hydroxyacyl-[ACP] = a UDP-2-N,3-O-bis[(3R)-3-hydroxyacyl]-alpha-D-glucosamine + holo-[ACP] + H(+). Its pathway is bacterial outer membrane biogenesis; LPS lipid A biosynthesis. Catalyzes the N-acylation of UDP-3-O-acylglucosamine using 3-hydroxyacyl-ACP as the acyl donor. Is involved in the biosynthesis of lipid A, a phosphorylated glycolipid that anchors the lipopolysaccharide to the outer membrane of the cell. The polypeptide is UDP-3-O-acylglucosamine N-acyltransferase (Methylobacillus flagellatus (strain ATCC 51484 / DSM 6875 / VKM B-1610 / KT)).